The following is a 310-amino-acid chain: Ribosomal RNA small subunit methyltransferase H (310 aa).

Residues 32–34 (AGH), Asp-51, Phe-84, Asp-102, and Gln-109 each bind S-adenosyl-L-methionine.

This sequence belongs to the methyltransferase superfamily. RsmH family.

The protein localises to the cytoplasm. The enzyme catalyses cytidine(1402) in 16S rRNA + S-adenosyl-L-methionine = N(4)-methylcytidine(1402) in 16S rRNA + S-adenosyl-L-homocysteine + H(+). In terms of biological role, specifically methylates the N4 position of cytidine in position 1402 (C1402) of 16S rRNA. The polypeptide is Ribosomal RNA small subunit methyltransferase H (Campylobacter hominis (strain ATCC BAA-381 / DSM 21671 / CCUG 45161 / LMG 19568 / NCTC 13146 / CH001A)).